Reading from the N-terminus, the 331-residue chain is L-lactate dehydrogenase A chain (331 aa).

Residues 29–57 (GMVG…MEDK) and Arg-98 each bind NAD(+). The substrate site is built by Arg-105, Asn-137, and Arg-168. Asn-137 lines the NAD(+) pocket. His-192 (proton acceptor) is an active-site residue. Position 247 (Thr-247) interacts with substrate.

This sequence belongs to the LDH/MDH superfamily. LDH family. Homotetramer.

Its subcellular location is the cytoplasm. The enzyme catalyses (S)-lactate + NAD(+) = pyruvate + NADH + H(+). The protein operates within fermentation; pyruvate fermentation to lactate; (S)-lactate from pyruvate: step 1/1. Functionally, interconverts simultaneously and stereospecifically pyruvate and lactate with concomitant interconversion of NADH and NAD(+). This is L-lactate dehydrogenase A chain (ldha) from Gobionotothen gibberifrons (Humped rockcod).